Consider the following 197-residue polypeptide: Probable molybdenum cofactor guanylyltransferase (197 aa).

GTP contacts are provided by residues 12–14 (LAG), lysine 24, aspartate 71, and aspartate 103. Residue aspartate 103 participates in Mg(2+) binding.

It belongs to the MobA family. Mg(2+) is required as a cofactor.

The protein resides in the cytoplasm. The catalysed reaction is Mo-molybdopterin + GTP + H(+) = Mo-molybdopterin guanine dinucleotide + diphosphate. In terms of biological role, transfers a GMP moiety from GTP to Mo-molybdopterin (Mo-MPT) cofactor (Moco or molybdenum cofactor) to form Mo-molybdopterin guanine dinucleotide (Mo-MGD) cofactor. This is Probable molybdenum cofactor guanylyltransferase from Mycolicibacterium paratuberculosis (strain ATCC BAA-968 / K-10) (Mycobacterium paratuberculosis).